The following is a 954-amino-acid chain: Endoplasmic reticulum aminopeptidase 2 (954 aa).

The Cytoplasmic portion of the chain corresponds to 1–7 (MANSCRK). Residues 8–28 (LIFNIYVVFYCSAVIMPQICI) traverse the membrane as a helical; Signal-anchor for type II membrane protein segment. At 29-954 (CSQFTSSPID…TLRKWLLTSI (926 aa)) the chain is on the lumenal side. Asn-79 and Asn-113 each carry an N-linked (GlcNAc...) asparagine glycan. Substrate contacts are provided by residues Glu-194 and 328–332 (GAMEN). Residue His-364 participates in Zn(2+) binding. Residue Glu-365 is the Proton acceptor of the active site. Positions 368 and 387 each coordinate Zn(2+). A glycan (N-linked (GlcNAc...) asparagine) is linked at Asn-399. An intrachain disulfide couples Cys-415 to Cys-454. N-linked (GlcNAc...) asparagine glycosylation occurs at Asn-644. A disulfide bond links Cys-753 and Cys-760.

It belongs to the peptidase M1 family. In terms of assembly, heterodimer with ERAP1. The cofactor is Zn(2+). Post-translationally, N-glycosylated.

Its subcellular location is the endoplasmic reticulum membrane. In terms of biological role, aminopeptidase that plays a central role in peptide trimming, a step required for the generation of most HLA class I-binding peptides. Peptide trimming is essential to customize longer precursor peptides to fit them to the correct length required for presentation on MHC class I molecules. Preferentially hydrolyzes the basic residues Arg and Lys. In Bos taurus (Bovine), this protein is Endoplasmic reticulum aminopeptidase 2 (ERAP2).